Here is a 247-residue protein sequence, read N- to C-terminus: 2,3-bisphosphoglycerate-dependent phosphoglycerate mutase (247 aa).

Substrate-binding positions include 8–15 (RHGESQWN), 21–22 (TG), Arg-60, 87–90 (ERHY), Lys-98, 114–115 (RR), and 183–184 (GN). His-9 acts as the Tele-phosphohistidine intermediate in catalysis. Glu-87 serves as the catalytic Proton donor/acceptor.

The protein belongs to the phosphoglycerate mutase family. BPG-dependent PGAM subfamily.

The enzyme catalyses (2R)-2-phosphoglycerate = (2R)-3-phosphoglycerate. It participates in carbohydrate degradation; glycolysis; pyruvate from D-glyceraldehyde 3-phosphate: step 3/5. Catalyzes the interconversion of 2-phosphoglycerate and 3-phosphoglycerate. This chain is 2,3-bisphosphoglycerate-dependent phosphoglycerate mutase, found in Prosthecochloris aestuarii (strain DSM 271 / SK 413).